The following is a 1230-amino-acid chain: ATP-dependent helicase/nuclease subunit A (1230 aa).

The 471-residue stretch at 3 to 473 folds into the UvrD-like helicase ATP-binding domain; sequence TKFTKNQQRA…IDLADNFRSQ (471 aa). 24 to 31 contributes to the ATP binding site; it reads ASAGSGKT. In terms of domain architecture, UvrD-like helicase C-terminal spans 500 to 782; it reads EAKLVPKAAY…RIMTIHASKG (283 aa).

The protein belongs to the helicase family. AddA subfamily. In terms of assembly, heterodimer of AddA and AddB/RexB. It depends on Mg(2+) as a cofactor.

It catalyses the reaction Couples ATP hydrolysis with the unwinding of duplex DNA by translocating in the 3'-5' direction.. The enzyme catalyses ATP + H2O = ADP + phosphate + H(+). In terms of biological role, the heterodimer acts as both an ATP-dependent DNA helicase and an ATP-dependent, dual-direction single-stranded exonuclease. Recognizes the chi site generating a DNA molecule suitable for the initiation of homologous recombination. The AddA nuclease domain is required for chi fragment generation; this subunit has the helicase and 3' -&gt; 5' nuclease activities. This chain is ATP-dependent helicase/nuclease subunit A, found in Leuconostoc mesenteroides subsp. mesenteroides (strain ATCC 8293 / DSM 20343 / BCRC 11652 / CCM 1803 / JCM 6124 / NCDO 523 / NBRC 100496 / NCIMB 8023 / NCTC 12954 / NRRL B-1118 / 37Y).